The primary structure comprises 38 residues: Large ribosomal subunit protein bL36 (38 aa).

This sequence belongs to the bacterial ribosomal protein bL36 family.

This chain is Large ribosomal subunit protein bL36, found in Roseiflexus castenholzii (strain DSM 13941 / HLO8).